A 375-amino-acid chain; its full sequence is MSKRDYYEVLGVERGATEADLKKAYRRLAMKYHPDRNPGDKESEDKFKEANEAYEVLSDASKRAAFDQYGHAGVDPSMGGGGAGFGGANFSDIFGDVFSDFFGGGGRGGGRGGAQRGSDLRYTLELNLEEAVRGTTVSIRVPTLVNCQPCDGSGAKKGSTPSTCPTCGGIGQVRMQQGFFSVQQTCPRCHGQGKIITDPCTSCHGEGRVEEYKTLSVKVPAGVDTGDRIRLSGEGEAGTHGGPTGDLYVVISVREHEIFQRDGKHLYCEVPISYTDAALGGELEVPTLDGRVKLKIPEGTQTGKQFRLRGKGVAPVRGGGAGDLLCRVAVETPVNLSRRQRELLEELRDSLEGDSSHSPKASGWFDGVKRFFGDL.

The region spanning 5 to 70 (DYYEVLGVER…SKRAAFDQYG (66 aa)) is the J domain. Residues 134 to 212 (GTTVSIRVPT…CHGEGRVEEY (79 aa)) form a CR-type zinc finger. Residues Cys147, Cys150, Cys164, Cys167, Cys186, Cys189, Cys200, and Cys203 each coordinate Zn(2+). CXXCXGXG motif repeat units lie at residues 147–154 (CQPCDGSG), 164–171 (CPTCGGIG), 186–193 (CPRCHGQG), and 200–207 (CTSCHGEG).

Belongs to the DnaJ family. As to quaternary structure, homodimer. Zn(2+) is required as a cofactor.

The protein localises to the cytoplasm. Functionally, participates actively in the response to hyperosmotic and heat shock by preventing the aggregation of stress-denatured proteins and by disaggregating proteins, also in an autonomous, DnaK-independent fashion. Unfolded proteins bind initially to DnaJ; upon interaction with the DnaJ-bound protein, DnaK hydrolyzes its bound ATP, resulting in the formation of a stable complex. GrpE releases ADP from DnaK; ATP binding to DnaK triggers the release of the substrate protein, thus completing the reaction cycle. Several rounds of ATP-dependent interactions between DnaJ, DnaK and GrpE are required for fully efficient folding. Also involved, together with DnaK and GrpE, in the DNA replication of plasmids through activation of initiation proteins. The chain is Chaperone protein DnaJ from Pseudomonas putida (strain ATCC 47054 / DSM 6125 / CFBP 8728 / NCIMB 11950 / KT2440).